Reading from the N-terminus, the 207-residue chain is LexA repressor (207 aa).

A DNA-binding region (H-T-H motif) is located at residues 28–48; that stretch reads RAEIAQKLGFKSANAAEEHLK. Catalysis depends on for autocatalytic cleavage activity residues S124 and K161.

It belongs to the peptidase S24 family. Homodimer.

It carries out the reaction Hydrolysis of Ala-|-Gly bond in repressor LexA.. Its function is as follows. Represses a number of genes involved in the response to DNA damage (SOS response), including recA and lexA. In the presence of single-stranded DNA, RecA interacts with LexA causing an autocatalytic cleavage which disrupts the DNA-binding part of LexA, leading to derepression of the SOS regulon and eventually DNA repair. The protein is LexA repressor of Aeromonas hydrophila subsp. hydrophila (strain ATCC 7966 / DSM 30187 / BCRC 13018 / CCUG 14551 / JCM 1027 / KCTC 2358 / NCIMB 9240 / NCTC 8049).